We begin with the raw amino-acid sequence, 308 residues long: Lipoyl synthase (308 aa).

[4Fe-4S] cluster is bound by residues cysteine 51, cysteine 56, cysteine 62, cysteine 77, cysteine 81, cysteine 84, and serine 290. Positions 63-279 (WSKRHATFMI…ETIAKSKGFL (217 aa)) constitute a Radical SAM core domain.

This sequence belongs to the radical SAM superfamily. Lipoyl synthase family. The cofactor is [4Fe-4S] cluster.

Its subcellular location is the cytoplasm. The enzyme catalyses [[Fe-S] cluster scaffold protein carrying a second [4Fe-4S](2+) cluster] + N(6)-octanoyl-L-lysyl-[protein] + 2 oxidized [2Fe-2S]-[ferredoxin] + 2 S-adenosyl-L-methionine + 4 H(+) = [[Fe-S] cluster scaffold protein] + N(6)-[(R)-dihydrolipoyl]-L-lysyl-[protein] + 4 Fe(3+) + 2 hydrogen sulfide + 2 5'-deoxyadenosine + 2 L-methionine + 2 reduced [2Fe-2S]-[ferredoxin]. It participates in protein modification; protein lipoylation via endogenous pathway; protein N(6)-(lipoyl)lysine from octanoyl-[acyl-carrier-protein]: step 2/2. In terms of biological role, catalyzes the radical-mediated insertion of two sulfur atoms into the C-6 and C-8 positions of the octanoyl moiety bound to the lipoyl domains of lipoate-dependent enzymes, thereby converting the octanoylated domains into lipoylated derivatives. The chain is Lipoyl synthase from Pelagibacter ubique (strain HTCC1062).